Here is a 101-residue protein sequence, read N- to C-terminus: NAD(P)H-quinone oxidoreductase subunit 4L, chloroplastic (101 aa).

The next 3 helical transmembrane spans lie at 2–22, 32–52, and 61–81; these read ILEHVLVLSAYLFLIGLYGLI, MCLELILNAVNMNFVTFSDFF, and IFCIFVIAIAAAEAAIGLAIV.

This sequence belongs to the complex I subunit 4L family. As to quaternary structure, NDH is composed of at least 16 different subunits, 5 of which are encoded in the nucleus.

It is found in the plastid. Its subcellular location is the chloroplast thylakoid membrane. It catalyses the reaction a plastoquinone + NADH + (n+1) H(+)(in) = a plastoquinol + NAD(+) + n H(+)(out). It carries out the reaction a plastoquinone + NADPH + (n+1) H(+)(in) = a plastoquinol + NADP(+) + n H(+)(out). Its function is as follows. NDH shuttles electrons from NAD(P)H:plastoquinone, via FMN and iron-sulfur (Fe-S) centers, to quinones in the photosynthetic chain and possibly in a chloroplast respiratory chain. The immediate electron acceptor for the enzyme in this species is believed to be plastoquinone. Couples the redox reaction to proton translocation, and thus conserves the redox energy in a proton gradient. This chain is NAD(P)H-quinone oxidoreductase subunit 4L, chloroplastic, found in Arabidopsis thaliana (Mouse-ear cress).